Here is a 399-residue protein sequence, read N- to C-terminus: Acetate kinase (399 aa).

A Mg(2+)-binding site is contributed by Asn7. An ATP-binding site is contributed by Lys14. Residue Arg91 coordinates substrate. Catalysis depends on Asp148, which acts as the Proton donor/acceptor. Residues 208-212, 283-285, and 331-335 contribute to the ATP site; these read HIGNG, DMR, and GVGEN. Glu385 is a Mg(2+) binding site.

It belongs to the acetokinase family. Homodimer. Mg(2+) serves as cofactor. It depends on Mn(2+) as a cofactor.

The protein resides in the cytoplasm. The catalysed reaction is acetate + ATP = acetyl phosphate + ADP. It participates in metabolic intermediate biosynthesis; acetyl-CoA biosynthesis; acetyl-CoA from acetate: step 1/2. Functionally, catalyzes the formation of acetyl phosphate from acetate and ATP. Can also catalyze the reverse reaction. The sequence is that of Acetate kinase from Bacteroides thetaiotaomicron (strain ATCC 29148 / DSM 2079 / JCM 5827 / CCUG 10774 / NCTC 10582 / VPI-5482 / E50).